Reading from the N-terminus, the 345-residue chain is Sesquiterpene synthase PILCRDRAFT_825684 (345 aa).

Positions 91, 226, 230, and 234 each coordinate Mg(2+). Positions 91-95 match the DDXXD motif motif; it reads DELTD. 2 residues coordinate (2E,6E)-farnesyl diphosphate: Arg-316 and Tyr-317.

The protein belongs to the terpene synthase family. It depends on Mg(2+) as a cofactor.

It carries out the reaction (2E,6E)-farnesyl diphosphate = viridiflorene + diphosphate. Its function is as follows. Terpene cyclase that catalyzes the cyclization of farnesyl diphosphate (FPP) to various sesquiterpenes, including beta-elemene, viridiflorene and gamma-cadinene. Gamma-cadinene is the major product of PILCRDRAFT_825684. The sequence is that of Sesquiterpene synthase PILCRDRAFT_825684 from Piloderma croceum (strain F 1598).